The sequence spans 453 residues: Tubulin alpha-13 chain (453 aa).

Residue glutamine 11 participates in GTP binding. Lysine 40 carries the post-translational modification N6-acetyllysine. GTP-binding residues include glutamate 71, serine 140, glycine 144, threonine 145, threonine 179, asparagine 206, and asparagine 228. A Mg(2+)-binding site is contributed by glutamate 71. Residue glutamate 254 is part of the active site. Residues 429-453 (EKDYEEVGTESQEGDGEEGEDGGDQ) form a disordered region. Acidic residues predominate over residues 431–453 (DYEEVGTESQEGDGEEGEDGGDQ).

It belongs to the tubulin family. As to quaternary structure, dimer of alpha and beta chains. A typical microtubule is a hollow water-filled tube with an outer diameter of 25 nm and an inner diameter of 15 nM. Alpha-beta heterodimers associate head-to-tail to form protofilaments running lengthwise along the microtubule wall with the beta-tubulin subunit facing the microtubule plus end conferring a structural polarity. Microtubules usually have 13 protofilaments but different protofilament numbers can be found in some organisms and specialized cells. Mg(2+) is required as a cofactor. Post-translationally, acetylation of alpha chains at Lys-40 stabilizes microtubules and affects affinity and processivity of microtubule motors. This modification has a role in multiple cellular functions, ranging from cell motility, cell cycle progression or cell differentiation to intracellular trafficking and signaling.

It localises to the cytoplasm. The protein localises to the cytoskeleton. The catalysed reaction is GTP + H2O = GDP + phosphate + H(+). Its function is as follows. Tubulin is the major constituent of microtubules, a cylinder consisting of laterally associated linear protofilaments composed of alpha- and beta-tubulin heterodimers. Microtubules grow by the addition of GTP-tubulin dimers to the microtubule end, where a stabilizing cap forms. Below the cap, tubulin dimers are in GDP-bound state, owing to GTPase activity of alpha-tubulin. This chain is Tubulin alpha-13 chain (TUBA13), found in Naegleria pringsheimi (Amoeba).